Reading from the N-terminus, the 707-residue chain is Metal transporter CNNM3 (707 aa).

A helical membrane pass occupies residues 11 to 27 (LGWLFAALCLGNAAGEA). N-linked (GlcNAc...) asparagine glycosylation is present at Asn73. The region spanning 130 to 308 (EAAPPWALGL…DPYSDLSKGV (179 aa)) is the CNNM transmembrane domain. The next 3 helical transmembrane spans lie at 193-213 (CALG…AVLL), 221-241 (AVPA…VVPA), and 261-281 (LAVL…ELAA). CBS domains are found at residues 318–379 (LTPL…CTPL) and 386–452 (YNHP…ILDE). Residue Ser661 is modified to Phosphoserine. Residues 678–691 (LGEKTTTAAGSSHS) show a composition bias toward polar residues. Residues 678–707 (LGEKTTTAAGSSHSRPGVPVEGSPGRNPGV) form a disordered region. Phosphoserine is present on Ser700.

This sequence belongs to the ACDP family. Widely expressed. Expressed at higher level in heart and spleen.

It is found in the cell membrane. In terms of biological role, probable metal transporter. This is Metal transporter CNNM3 (CNNM3) from Homo sapiens (Human).